A 527-amino-acid chain; its full sequence is Protein PyrBI (527 aa).

The tract at residues 1–342 (MKRDFLGRTL…MFGGALEAPF (342 aa)) is aspartate carbamoyltransferase. Positions 343–357 (DTSKKEEKPEEDFII) are linker. Residues 368-527 (VQKEGKRGIK…PHSFEEIWSI (160 aa)) are aspartate carbamoyltransferase regulatory region. Positions 483, 488, 512, and 515 each coordinate Zn(2+).

In the N-terminal section; belongs to the aspartate/ornithine carbamoyltransferase superfamily. ATCase family. The protein in the C-terminal section; belongs to the PyrI family.

It carries out the reaction carbamoyl phosphate + L-aspartate = N-carbamoyl-L-aspartate + phosphate + H(+). It participates in pyrimidine metabolism; UMP biosynthesis via de novo pathway; (S)-dihydroorotate from bicarbonate: step 2/3. This chain is Protein PyrBI (pyrBI), found in Thermotoga maritima (strain ATCC 43589 / DSM 3109 / JCM 10099 / NBRC 100826 / MSB8).